The following is a 262-amino-acid chain: tRNA pseudouridine synthase A (262 aa).

Residue Asp-55 is the Nucleophile of the active site. Tyr-116 contributes to the substrate binding site.

It belongs to the tRNA pseudouridine synthase TruA family. As to quaternary structure, homodimer.

The catalysed reaction is uridine(38/39/40) in tRNA = pseudouridine(38/39/40) in tRNA. Its function is as follows. Formation of pseudouridine at positions 38, 39 and 40 in the anticodon stem and loop of transfer RNAs. This Bdellovibrio bacteriovorus (strain ATCC 15356 / DSM 50701 / NCIMB 9529 / HD100) protein is tRNA pseudouridine synthase A.